We begin with the raw amino-acid sequence, 352 residues long: Biotin synthase (352 aa).

In terms of domain architecture, Radical SAM core spans 44–262; the sequence is NRVQVSTLLS…LAVARILMPK (219 aa). [4Fe-4S] cluster contacts are provided by C59, C63, and C66. [2Fe-2S] cluster-binding residues include C103, C134, C194, and R266.

Belongs to the radical SAM superfamily. Biotin synthase family. As to quaternary structure, homodimer. It depends on [4Fe-4S] cluster as a cofactor. Requires [2Fe-2S] cluster as cofactor.

The enzyme catalyses (4R,5S)-dethiobiotin + (sulfur carrier)-SH + 2 reduced [2Fe-2S]-[ferredoxin] + 2 S-adenosyl-L-methionine = (sulfur carrier)-H + biotin + 2 5'-deoxyadenosine + 2 L-methionine + 2 oxidized [2Fe-2S]-[ferredoxin]. The protein operates within cofactor biosynthesis; biotin biosynthesis; biotin from 7,8-diaminononanoate: step 2/2. In terms of biological role, catalyzes the conversion of dethiobiotin (DTB) to biotin by the insertion of a sulfur atom into dethiobiotin via a radical-based mechanism. This is Biotin synthase from Pseudomonas putida (strain ATCC 47054 / DSM 6125 / CFBP 8728 / NCIMB 11950 / KT2440).